Here is an 833-residue protein sequence, read N- to C-terminus: Zinc phosphodiesterase ELAC protein 2 homolog (833 aa).

A mitochondrion-targeting transit peptide spans 1 to 19 (MLGAIARKTVENRILVSRH). A compositionally biased stretch (pro residues) spans 624-646 (LTPPGSPGGPPGKRPRLPSPHLP). Residues 624–652 (LTPPGSPGGPPGKRPRLPSPHLPPSRDVL) are disordered.

This sequence belongs to the RNase Z family. As to quaternary structure, homodimer. Zn(2+) serves as cofactor. As to expression, highly expressed in the germline.

Its subcellular location is the mitochondrion. It localises to the nucleus. The catalysed reaction is Endonucleolytic cleavage of RNA, removing extra 3' nucleotides from tRNA precursor, generating 3' termini of tRNAs. A 3'-hydroxy group is left at the tRNA terminus and a 5'-phosphoryl group is left at the trailer molecule.. In terms of biological role, zinc phosphodiesterase, which displays some tRNA 3'-processing endonuclease activity. Probably involved in tRNA maturation, by removing a 3'-trailer from precursor tRNA. Involved in germline proliferation. May be required for both mitosis and meiosis in germ cells. Its function is as follows. Does not regulate the mitochondrial unfolded protein response following mitochondrial stress. Plays a role in mitochondrial unfolded protein response. Upon mitochondrial stress is exported from the nucleus where its tRNA endonuclease activity is negatively regulated. In response to mitochondrial stress, might be involved in activating a transcriptional response in an ATFS-1- and DVE-1-dependent manner. May play a role in negatively regulating the mitochondrial membrane potential. This Caenorhabditis elegans protein is Zinc phosphodiesterase ELAC protein 2 homolog.